A 476-amino-acid polypeptide reads, in one-letter code: Growth/differentiation factor 10 (476 aa).

The first 29 residues, 1-29, serve as a signal peptide directing secretion; the sequence is MAPGLARISLRSQLLPLVPLLLLLRGAGC. Residues 30–366 constitute a propeptide that is removed on maturation; that stretch reads GHRVPSWSSL…EKTMQKARRR (337 aa). N-linked (GlcNAc...) asparagine glycans are attached at residues asparagine 114, asparagine 152, and asparagine 277. Disordered stretches follow at residues 268-305 and 330-358; these read GDFEPGAAPNSSADPRVRRAAQVSKPLQDNELPGLDER and PRTGRKDRKKKDQDTFTPSSSQVLDFDEK. Disulfide bonds link cysteine 374-cysteine 441, cysteine 403-cysteine 473, and cysteine 407-cysteine 475. N-linked (GlcNAc...) asparagine glycosylation is present at asparagine 467.

The protein belongs to the TGF-beta family. As to quaternary structure, homodimer or heterodimer. Can form a non-covalent complex of the mature region and the pro-region. Costa, costicartilage, femur, calvaria, trachea, aorta and brain. Predominantly in the cerebellum.

The protein resides in the secreted. Its function is as follows. Growth factor involved in osteogenesis and adipogenesis. Plays an inhibitory role in the process of osteoblast differentiation via SMAD2/3 pathway. Plays an inhibitory role in the process of adipogenesis. The chain is Growth/differentiation factor 10 from Rattus norvegicus (Rat).